We begin with the raw amino-acid sequence, 864 residues long: MDASYQPEQIEAQAQRYWDEQQSFAAREEREGEKFYCLSMFPYPSGRLHMGHVRNYTIGDVISRYQRMQGRNVLQPMGWDAFGLPAENAAMKHGVPPARWTRENIETMRGQLQRLGFAYDWDREFATCDPEYYRWEQWLFTRLYKKGLVYKKTATVNWDPVDQTVLANEQVVDGRGWRSGAVVERRDIPQWFLRITDYADELLEALDELPGWPEQVRAMQRNWIGRSEGVELDFAVAGHSDTLRVYTTRPDTLYGVTYVGLAPEHPLAAEAAEGNPEMQRFIEDCRKGGVAEADIATMEKRGMDTGLKAVHPLTGEQVPIWVANFVLMEYGHGAVMAVPAHDQRDWEFASKYGLDIRPVVHPSAEERADVSEGAFTDDGVLADSGEFSGLPSAEARQAIGEKLEGLGKGERTVNYRLRDWGISRQRYWGAPIPMIQCPACGDVPVPDEDLPVVLPEDVDVTGGGSPLKDLPAFYQTTCPQCGGEARRETDTFDTFMESSWYYARFACADQKGAMLDERADQWLPVDQYIGGIEHAILHLLYARFFHKLMRDEGLLQSDEPFRNLLTQGMVIAETYYRERGDGGKDWYNPAEVTVQRDERGRPVSAVLEDDGEPVVMGAIEKMSKSKNNGVDPQALIDRYGADTVRLYTMFAAPPDQSLEWSDSAVEGAYRFLRRYYGLVRDHVAAGPVPALDVASLDDAARDLRRKVHETIAKASDDVGRRYTFNTAIAAVMELCNALGKAAANEPSGAARAVLQEGLEAATLILAPIAPHVTHVCWQALGHDEAVIDARWPAVDESALTRDTIELVVQVNGKLRSRLQLPADADKAAAEAAALADEKVQRFTEGKTVRKVIVVPGKLVNIVAN.

Positions 42 to 52 match the 'HIGH' region motif; sequence PYPSGRLHMGH. The short motif at 621-625 is the 'KMSKS' region element; the sequence is KMSKS. Lys624 contacts ATP.

It belongs to the class-I aminoacyl-tRNA synthetase family.

The protein resides in the cytoplasm. It carries out the reaction tRNA(Leu) + L-leucine + ATP = L-leucyl-tRNA(Leu) + AMP + diphosphate. The polypeptide is Leucine--tRNA ligase (Alkalilimnicola ehrlichii (strain ATCC BAA-1101 / DSM 17681 / MLHE-1)).